Consider the following 431-residue polypeptide: 3-phosphoshikimate 1-carboxyvinyltransferase (431 aa).

Positions 21, 22, and 26 each coordinate 3-phosphoshikimate. Residue lysine 21 participates in phosphoenolpyruvate binding. Residues glycine 93 and arginine 121 each contribute to the phosphoenolpyruvate site. Serine 166, glutamine 168, aspartate 318, and lysine 345 together coordinate 3-phosphoshikimate. Residue glutamine 168 coordinates phosphoenolpyruvate. Aspartate 318 functions as the Proton acceptor in the catalytic mechanism. Residues arginine 349 and arginine 391 each coordinate phosphoenolpyruvate.

Belongs to the EPSP synthase family. Monomer.

It localises to the cytoplasm. It catalyses the reaction 3-phosphoshikimate + phosphoenolpyruvate = 5-O-(1-carboxyvinyl)-3-phosphoshikimate + phosphate. The protein operates within metabolic intermediate biosynthesis; chorismate biosynthesis; chorismate from D-erythrose 4-phosphate and phosphoenolpyruvate: step 6/7. Its function is as follows. Catalyzes the transfer of the enolpyruvyl moiety of phosphoenolpyruvate (PEP) to the 5-hydroxyl of shikimate-3-phosphate (S3P) to produce enolpyruvyl shikimate-3-phosphate and inorganic phosphate. In Sulfurihydrogenibium sp. (strain YO3AOP1), this protein is 3-phosphoshikimate 1-carboxyvinyltransferase.